Here is a 140-residue protein sequence, read N- to C-terminus: uncharacterized protein (140 aa).

A run of 4 helical transmembrane segments spans residues 4–24 (LLLA…SFSG), 56–76 (EAFI…YLLW), 84–104 (SAAA…LFFS), and 109–129 (IRDV…YVLA).

Its subcellular location is the cell membrane. Its function is as follows. May be important for peptidoglycan remodeling. This is an uncharacterized protein from Bacillus subtilis (strain 168).